Consider the following 397-residue polypeptide: uncharacterized protein (397 aa).

A phosphoserine mark is found at Ser115 and Ser141. A disordered region spans residues 135 to 156; that stretch reads NSLNHDSPPHTPARRSDNSTSK. Residue Lys239 forms a Glycyl lysine isopeptide (Lys-Gly) (interchain with G-Cter in SUMO2) linkage. Phosphoserine is present on residues Ser269 and Ser296. A disordered region spans residues 289-316; it reads GRGPTKASPQPALTVKAKATSSATTLAS. A compositionally biased stretch (low complexity) spans 300-316; it reads ALTVKAKATSSATTLAS. Position 342 is a phosphoserine (Ser342). The segment at 354-397 is disordered; sequence SEAQDSQVTSTKSPTVRCIVPDPPAPLASQRPPRRRWRRTCKDC. Residues 356–367 are compositionally biased toward polar residues; sequence AQDSQVTSTKSP. Basic residues predominate over residues 385–397; it reads PPRRRWRRTCKDC.

This is an uncharacterized protein from Rattus norvegicus (Rat).